The primary structure comprises 314 residues: O-antigen chain rhamnosyltransferase RfbN (314 aa).

It belongs to the glycosyltransferase 2 family.

It carries out the reaction alpha-D-galactosyl-di-trans,octa-cis-undecaprenyl diphosphate + dTDP-beta-L-rhamnose = alpha-L-rhamnosyl-(1-&gt;3)-alpha-D-galactosyl-1-diphospho-di-trans,octa-cis-undecaprenol + dTDP + H(+). The protein operates within bacterial outer membrane biogenesis; LPS O-antigen biosynthesis. In terms of biological role, rhamnosyltransferase involved in the biosynthesis of the repeat unit of the lipopolysaccharide (LPS) O-antigen region. Catalyzes the addition of a rhamnose to the galactosyl-undecaprenyl diphosphate intermediate. The chain is O-antigen chain rhamnosyltransferase RfbN from Salmonella typhimurium (strain LT2 / SGSC1412 / ATCC 700720).